We begin with the raw amino-acid sequence, 406 residues long: Enoyl-[acyl-carrier-protein] reductase [NADH] (406 aa).

NAD(+) contacts are provided by residues 48 to 53, 74 to 75, 111 to 112, and 140 to 141; these read GASTGF, FE, DA, and IA. Tyrosine 226 is a substrate binding site. The active-site Proton donor is the tyrosine 236. NAD(+) is bound by residues lysine 245 and 275 to 277; that span reads LVT.

It belongs to the TER reductase family. As to quaternary structure, monomer.

The enzyme catalyses a 2,3-saturated acyl-[ACP] + NAD(+) = a (2E)-enoyl-[ACP] + NADH + H(+). The protein operates within lipid metabolism; fatty acid biosynthesis. Involved in the final reduction of the elongation cycle of fatty acid synthesis (FAS II). Catalyzes the reduction of a carbon-carbon double bond in an enoyl moiety that is covalently linked to an acyl carrier protein (ACP). This chain is Enoyl-[acyl-carrier-protein] reductase [NADH], found in Coxiella burnetii (strain CbuK_Q154) (Coxiella burnetii (strain Q154)).